A 200-amino-acid chain; its full sequence is Small ribosomal subunit protein mS26 (200 aa).

Residues M1 to R27 constitute a mitochondrion transit peptide. The segment at M1–T44 is disordered. K159 is subject to N6-acetyllysine.

This sequence belongs to the mitochondrion-specific ribosomal protein mS26 family. In terms of assembly, component of the mitochondrial ribosome small subunit (28S) which comprises a 12S rRNA and about 30 distinct proteins.

It localises to the mitochondrion. In Mus musculus (Mouse), this protein is Small ribosomal subunit protein mS26 (Mrps26).